Here is a 473-residue protein sequence, read N- to C-terminus: Photosystem II CP43 reaction center protein (473 aa).

Positions 1-14 (MKNLYSLRRFYHVE) are excised as a propeptide. N-acetylthreonine is present on Thr15. Thr15 is modified (phosphothreonine). The next 5 helical transmembrane spans lie at 69-93 (LFEVAHFVPEKPMYEQGLILLPHLA), 134-155 (LIGPETLEESFPFFGYVWKDKN), 178-200 (KARYLGGVYDTWAPGGGDVRVIT), 255-275 (KPFGWARRAFVWSGEAYLSYS), and 291-312 (WFNNTVYPSEFYGPTGPEASQA). Glu367 lines the [CaMn4O5] cluster pocket. The chain crosses the membrane as a helical span at residues 447-471 (RARAAAAGFEKGIDRDTEPTLFMRP).

The protein belongs to the PsbB/PsbC family. PsbC subfamily. As to quaternary structure, PSII is composed of 1 copy each of membrane proteins PsbA, PsbB, PsbC, PsbD, PsbE, PsbF, PsbH, PsbI, PsbJ, PsbK, PsbL, PsbM, PsbT, PsbX, PsbY, PsbZ, Psb30/Ycf12, at least 3 peripheral proteins of the oxygen-evolving complex and a large number of cofactors. It forms dimeric complexes. The cofactor is Binds multiple chlorophylls and provides some of the ligands for the Ca-4Mn-5O cluster of the oxygen-evolving complex. It may also provide a ligand for a Cl- that is required for oxygen evolution. PSII binds additional chlorophylls, carotenoids and specific lipids..

It localises to the plastid. The protein localises to the chloroplast thylakoid membrane. Functionally, one of the components of the core complex of photosystem II (PSII). It binds chlorophyll and helps catalyze the primary light-induced photochemical processes of PSII. PSII is a light-driven water:plastoquinone oxidoreductase, using light energy to abstract electrons from H(2)O, generating O(2) and a proton gradient subsequently used for ATP formation. This chain is Photosystem II CP43 reaction center protein, found in Nephroselmis olivacea (Green alga).